The sequence spans 869 residues: Phosphatidylethanolamine N-methyltransferase (869 aa).

An N-acetylserine modification is found at serine 2. The Lumenal portion of the chain corresponds to 2-55; it reads SSCKTTLSEMVGSVTKDRGTINVEARTRSSNVTFKPPVTHDMVRSLFDPTLKKS. Residues 56-76 traverse the membrane as a helical segment; it reads LLEKCIALAIISNFFICYWVF. At 77-86 the chain is on the cytoplasmic side; sequence QRFGLQFTKY. A helical membrane pass occupies residues 87–107; sequence FFLVQYLFWRIAYNLGIGLVL. The Lumenal segment spans residues 108–187; sequence HYQSHYETLT…EINVWLIFRQ (80 aa). The helical transmembrane segment at 188–208 threads the bilayer; the sequence is FVDLILMQDFVTYIIYVYLSI. The Cytoplasmic portion of the chain corresponds to 209 to 212; that stretch reads PYSW. The chain crosses the membrane as a helical span at residues 213-233; that stretch reads VQIFNWRSLLGVILILFNIWV. Over 234-258 the chain is Lumenal; that stretch reads KLDAHRVVKDYAWYWGDFFFLEESE. The helical transmembrane segment at 259–279 threads the bilayer; sequence LIFDGVFNISPHPMYSIGYLG. The Cytoplasmic portion of the chain corresponds to 280–291; that stretch reads YYGLSLICNDYK. Residues 292-310 form a helical membrane-spanning segment; that stretch reads VLLVSVFGHYSQFLFLKYV. Topologically, residues 311–362 are lumenal; it reads ENPHIERTYGDGTDSDSQMNSRIDDLISKENYDYSRPLINMGLSFNNFNKLR. Residues 363-383 traverse the membrane as a helical segment; the sequence is FTDYFTIGTVAALMLGTIMNA. Topologically, residues 384 to 389 are cytoplasmic; the sequence is RFINLN. Residues 390–410 form a helical membrane-spanning segment; it reads YLFITVFVTKLVSWLFISTIL. The Lumenal segment spans residues 411–439; the sequence is YKQSQSKWFTRLFLENGYTQVYSYEQWQF. The chain crosses the membrane as a helical span at residues 440–460; the sequence is IYNYYLVLTYTLMIIHTGLQI. Topologically, residues 461–463 are cytoplasmic; that stretch reads WSN. Residues 464–484 traverse the membrane as a helical segment; that stretch reads FSNINNSQLIFGLILVALQTW. Over 485–534 the chain is Lumenal; sequence CDKETRLAISDFGWFYGDFFLSNYISTRKLTSQGIYRYLNHPEAVLGVVG. The helical transmembrane segment at 535-555 threads the bilayer; the sequence is VWGTVLMTNFAVTNIILAVLW. The Cytoplasmic segment spans residues 556 to 869; sequence TLTNFILVKF…DIKQTLDSLA (314 aa).

Belongs to the class VI-like SAM-binding methyltransferase superfamily. CHO2 family.

The protein resides in the endoplasmic reticulum membrane. The enzyme catalyses a 1,2-diacyl-sn-glycero-3-phosphoethanolamine + S-adenosyl-L-methionine = a 1,2-diacyl-sn-glycero-3-phospho-N-methylethanolamine + S-adenosyl-L-homocysteine + H(+). It participates in phospholipid metabolism; phosphatidylcholine biosynthesis. In terms of biological role, catalyzes the first step of the methylation pathway of phosphatidylcholine biosynthesis, the SAM-dependent methylation of phosphatidylethanolamine (PE) to phosphatidylmonomethylethanolamine (PMME). Preferentially converts di-C16:1 substrates. The protein is Phosphatidylethanolamine N-methyltransferase of Saccharomyces cerevisiae (strain ATCC 204508 / S288c) (Baker's yeast).